We begin with the raw amino-acid sequence, 167 residues long: Ubiquitin-fold modifier-conjugating enzyme 1 (167 aa).

Cysteine 116 (glycyl thioester intermediate) is an active-site residue.

Belongs to the ubiquitin-conjugating enzyme family. UFC1 subfamily.

Functionally, E2-like enzyme which forms an intermediate with UFM1 via a thioester linkage. The protein is Ubiquitin-fold modifier-conjugating enzyme 1 of Anopheles gambiae (African malaria mosquito).